A 286-amino-acid polypeptide reads, in one-letter code: Shikimate dehydrogenase (NADP(+)) (286 aa).

Residues 25-27 (SLS) and Thr72 contribute to the shikimate site. The active-site Proton acceptor is Lys76. Glu88 contacts NADP(+). Shikimate contacts are provided by Asn97 and Asp113. NADP(+) is bound by residues 138-142 (GSGGA), 162-167 (NRTIER), and Ile232. Tyr234 contributes to the shikimate binding site. Gly255 contributes to the NADP(+) binding site.

This sequence belongs to the shikimate dehydrogenase family. Homodimer.

It carries out the reaction shikimate + NADP(+) = 3-dehydroshikimate + NADPH + H(+). It participates in metabolic intermediate biosynthesis; chorismate biosynthesis; chorismate from D-erythrose 4-phosphate and phosphoenolpyruvate: step 4/7. In terms of biological role, involved in the biosynthesis of the chorismate, which leads to the biosynthesis of aromatic amino acids. Catalyzes the reversible NADPH linked reduction of 3-dehydroshikimate (DHSA) to yield shikimate (SA). This is Shikimate dehydrogenase (NADP(+)) from Magnetococcus marinus (strain ATCC BAA-1437 / JCM 17883 / MC-1).